A 403-amino-acid chain; its full sequence is Leu/Ile/Val-binding protein homolog 8 (403 aa).

Residues 1–26 form the signal peptide; sequence MRLSRLLIGASLGVALSSTVFTAALA.

The protein belongs to the leucine-binding protein family.

Component of an amino-acid transport system. This chain is Leu/Ile/Val-binding protein homolog 8, found in Brucella abortus (strain 2308).